An 85-amino-acid polypeptide reads, in one-letter code: UPF0335 protein Plav_2034 (85 aa).

Belongs to the UPF0335 family.

The polypeptide is UPF0335 protein Plav_2034 (Parvibaculum lavamentivorans (strain DS-1 / DSM 13023 / NCIMB 13966)).